The following is a 188-amino-acid chain: F-box only protein 36 (188 aa).

An F-box domain is found at 91–137 (FDFLERLSDDLLLTIISYLDLEDIARLCQTSHRFAKLCMSDKLWEQI).

Directly interacts with SKP1 and CUL1.

Functionally, substrate-recognition component of the SCF (SKP1-CUL1-F-box protein)-type E3 ubiquitin ligase complex. The sequence is that of F-box only protein 36 (FBXO36) from Homo sapiens (Human).